Consider the following 219-residue polypeptide: Cytochrome b6 (219 aa).

A helical membrane pass occupies residues 32–52; that stretch reads IFYCFGGIVLTAFIFQGASGF. A heme c-binding site is contributed by C35. Positions 86 and 100 each coordinate heme b. 3 consecutive transmembrane segments (helical) span residues 90–110, 116–136, and 190–210; these read SGCM…TGGF, LTWI…VTGY, and IHTF…FSLL. 2 residues coordinate heme b: H191 and H206.

The protein belongs to the cytochrome b family. PetB subfamily. In terms of assembly, the 4 large subunits of the cytochrome b6-f complex are cytochrome b6, subunit IV (17 kDa polypeptide, PetD), cytochrome f and the Rieske protein, while the 4 small subunits are PetG, PetL, PetM and PetN. The complex functions as a dimer. It depends on heme b as a cofactor. Requires heme c as cofactor.

Its subcellular location is the plastid. The protein localises to the chloroplast thylakoid membrane. In terms of biological role, component of the cytochrome b6-f complex, which mediates electron transfer between photosystem II (PSII) and photosystem I (PSI), cyclic electron flow around PSI, and state transitions. The sequence is that of Cytochrome b6 from Heterocapsa triquetra (Dinoflagellate).